The sequence spans 189 residues: UPF0149 protein VSAL_I2539 (189 aa).

It belongs to the UPF0149 family.

This is UPF0149 protein VSAL_I2539 from Aliivibrio salmonicida (strain LFI1238) (Vibrio salmonicida (strain LFI1238)).